The following is an 82-amino-acid chain: U16-lycotoxin-Ls1b (82 aa).

A signal peptide spans 1-22 (MSPKVQALLLLVGLITFLEVHA). The propeptide occupies 23–34 (EEELSETVESER). 4 disulfide bridges follow: Cys36-Cys51, Cys43-Cys56, Cys50-Cys67, and Cys58-Cys65.

Belongs to the neurotoxin 02 (plectoxin) family. 04 (U16-lycotoxin) subfamily. Expressed by the venom gland.

Its subcellular location is the secreted. The sequence is that of U16-lycotoxin-Ls1b from Lycosa singoriensis (Wolf spider).